A 186-amino-acid chain; its full sequence is uncharacterized protein (186 aa).

Residues 12–184 enclose the N-acetyltransferase domain; the sequence is LLKSPVEEDD…HIYKLSKQIR (173 aa).

Belongs to the acetyltransferase family.

The protein localises to the cytoplasm. The protein resides in the nucleus. This is an uncharacterized protein from Schizosaccharomyces pombe (strain 972 / ATCC 24843) (Fission yeast).